Reading from the N-terminus, the 430-residue chain is Spermatogenic leucine zipper protein 1 (430 aa).

The segment at 1–25 is disordered; that stretch reads MASSAKSAEMPTISKTVNPTPDPHQ. The stretch at 62-102 forms a coiled coil; that stretch reads EQQTAQKFNNLLKEIKDILKNMAGFEEKITEAKELFEETNI. Ser-107 carries the phosphoserine modification. Positions 166 to 177 are helix-loop-helix motif; it reads KINEMLSTNLPV. Positions 178 to 244 are basic motif; sequence SLAPEKEDNE…NVQEETMKIR (67 aa). 2 coiled-coil regions span residues 214-269 and 316-351; these read LEEK…KLIK and SLQL…TLQE. Position 258 is a phosphoserine (Ser-258). The leucine-zipper stretch occupies residues 303-324; it reads LEEQVKKLSHDTYSLQLMAALL.

As to quaternary structure, interacts with PPP1CC isoform gamma-2. Post-translationally, phosphorylated by MAPK1/ERK2 and MAPK3/ERK1. As to expression, specifically and strongly expressed in the testis. Expressed in several tumor cell lines.

The protein localises to the cytoplasm. It is found in the nucleus. Transcription factor that binds to the DNA sequence 5'-CANNTG-3'(E box) and the G-box motif. May play an important role in the regulation of cell proliferation and differentiation during spermatogenesis. This Homo sapiens (Human) protein is Spermatogenic leucine zipper protein 1 (SPZ1).